The sequence spans 418 residues: Nucleoredoxin (418 aa).

Positions 109-309 (KYKVTSIPSL…ESNAVQLHEG (201 aa)) constitute a Thioredoxin domain.

The protein belongs to the nucleoredoxin family.

The protein localises to the cytoplasm. The protein resides in the cytosol. It is found in the nucleus. It catalyses the reaction [protein]-dithiol + NAD(+) = [protein]-disulfide + NADH + H(+). It carries out the reaction [protein]-dithiol + NADP(+) = [protein]-disulfide + NADPH + H(+). Functions as a redox-dependent negative regulator of the Wnt signaling pathway. This chain is Nucleoredoxin (nxn), found in Danio rerio (Zebrafish).